The primary structure comprises 699 residues: D-(-)-3-hydroxybutyrate oligomer hydrolase (699 aa).

Residues 1–33 form the signal peptide; that stretch reads MTAIRGGSRRAPGLALALLGGVLLGACHGDENA. S311 serves as the catalytic Charge relay system.

It belongs to the D-(-)-3-hydroxybutyrate oligomer hydrolase family.

It is found in the secreted. It catalyses the reaction (3R)-hydroxybutanoate dimer + H2O = 2 (R)-3-hydroxybutanoate + H(+). It functions in the pathway lipid metabolism; butanoate metabolism. Participates in the degradation of poly-3-hydroxybutyrate (PHB). It works downstream of poly(3-hydroxybutyrate) depolymerase, hydrolyzing D(-)-3-hydroxybutyrate oligomers of various length (3HB-oligomers) into 3HB-monomers. The chain is D-(-)-3-hydroxybutyrate oligomer hydrolase from Burkholderia mallei (strain ATCC 23344).